Consider the following 352-residue polypeptide: Lipase chaperone (352 aa).

A helical membrane pass occupies residues 7–28 (LSLVAVVVAGGLTLYWRWPAAV).

It belongs to the lipase chaperone family.

The protein localises to the cell inner membrane. Functionally, may be involved in the folding of the extracellular lipase during its passage through the periplasm. The polypeptide is Lipase chaperone (lifO) (Pseudomonas wisconsinensis).